The sequence spans 368 residues: Flagellar P-ring protein (368 aa).

A signal peptide spans 1 to 22 (MLIPLARAVLALELLGAGAAHA).

Belongs to the FlgI family. As to quaternary structure, the basal body constitutes a major portion of the flagellar organelle and consists of four rings (L,P,S, and M) mounted on a central rod.

It is found in the periplasm. Its subcellular location is the bacterial flagellum basal body. In terms of biological role, assembles around the rod to form the L-ring and probably protects the motor/basal body from shearing forces during rotation. The sequence is that of Flagellar P-ring protein from Bordetella pertussis (strain Tohama I / ATCC BAA-589 / NCTC 13251).